Reading from the N-terminus, the 555-residue chain is (+)-delta-cadinene synthase isozyme A (555 aa).

The interval 1-22 (MASQASQVLASPHPAISSENRP) is disordered. 4 residues coordinate Mg(2+): Asp308, Asp312, Asp452, and Glu456. Positions 308 to 312 (DDTYD) match the DDXXD motif motif.

This sequence belongs to the terpene synthase family. It depends on Mg(2+) as a cofactor.

The catalysed reaction is (2E,6E)-farnesyl diphosphate = (1S,8aR)-delta-cadinene + diphosphate. The protein operates within secondary metabolite biosynthesis; terpenoid biosynthesis. Functionally, responsible for the cyclization of trans,trans-farnesyl diphosphate (FPP) to (+)-delta cadinene. The sequence is that of (+)-delta-cadinene synthase isozyme A (CAD1-A) from Gossypium arboreum (Tree cotton).